A 379-amino-acid polypeptide reads, in one-letter code: Armadillo repeat-containing X-linked protein 3 (379 aa).

At 1–6 (MGYARK) the chain is on the mitochondrial intermembrane side. Mitochondrion outer membrane (MOM)-targeting sequence stretches follow at residues 1 to 6 (MGYARK) and 26 to 37 (RLTRGRKQNKEK). The chain crosses the membrane as a helical; Signal-anchor span at residues 7 to 29 (VGWVTAGLVIGAGACYCIYRLTR). Residues 30 to 379 (GRKQNKEKMA…AEHMFPKSQE (350 aa)) lie on the Cytoplasmic side of the membrane. Phosphoserine is present on residues Ser-61, Ser-67, and Ser-72. The segment at 89–98 (RARARARARA) is nuclear localization signal. The span at 95–106 (RARATRARRAVQ) shows a compositional bias: basic residues. The disordered stretch occupies residues 95–116 (RARATRARRAVQKRASPNSDDT). At Ser-110 the chain carries Phosphoserine. ARM repeat units lie at residues 111–151 (PNSD…NNAA), 153–192 (AFNR…NLSV), and 233–272 (VTNE…NLAE).

The protein belongs to the eutherian X-chromosome-specific Armcx family. As to quaternary structure, interacts (via ARM domain) with MIRO1, MIRO2 and TRAK2. The interaction with Miro is calcium-dependent. Interacts with SOX10.

The protein resides in the mitochondrion outer membrane. Its subcellular location is the cytoplasm. The protein localises to the nucleus. In terms of biological role, regulates mitochondrial aggregation and transport in axons in living neurons. May link mitochondria to the TRAK2-kinesin motor complex via its interaction with Miro and TRAK2. Mitochondrial distribution and dynamics is regulated through ARMCX3 protein degradation, which is promoted by PCK and negatively regulated by WNT1. Enhances the SOX10-mediated transactivation of the neuronal acetylcholine receptor subunit alpha-3 and beta-4 subunit gene promoters. This Homo sapiens (Human) protein is Armadillo repeat-containing X-linked protein 3 (ARMCX3).